The chain runs to 95 residues: Mitochondrial import inner membrane translocase subunit Tim13 (95 aa).

Met-1 bears the N-acetylmethionine mark. A Phosphoserine modification is found at Ser-7. The Twin CX3C motif signature appears at Cys-46 to Cys-69. 2 cysteine pairs are disulfide-bonded: Cys-46–Cys-69 and Cys-50–Cys-65. Lys-53 is modified (N6-succinyllysine).

It belongs to the small Tim family. In terms of assembly, heterohexamer; composed of 3 copies of TIMM8 (TIMM8A or TIMM8B) and 3 copies of TIMM13, named soluble 70 kDa complex. Associates with the TIM22 complex, whose core is composed of TIMM22. Present at high level in liver and brain, and at lower level in muscle and heart. In CNS sections, it is predominantly present in the soma and the dendritic portion of the Purkinje cells of the cerebellum, but not in the glial cells. Scattered expression also is also detected in the brain stem, olfactory bulb, substantia nigra, hippocampus and striatum (at protein level).

The protein resides in the mitochondrion inner membrane. Functionally, mitochondrial intermembrane chaperone that participates in the import and insertion of some multi-pass transmembrane proteins into the mitochondrial inner membrane. Also required for the transfer of beta-barrel precursors from the TOM complex to the sorting and assembly machinery (SAM complex) of the outer membrane. Acts as a chaperone-like protein that protects the hydrophobic precursors from aggregation and guide them through the mitochondrial intermembrane space. The TIMM8-TIMM13 complex mediates the import of proteins such as TIMM23, SLC25A12/ARALAR1 and SLC25A13/ARALAR2, while the predominant TIMM9-TIMM10 70 kDa complex mediates the import of much more proteins. The sequence is that of Mitochondrial import inner membrane translocase subunit Tim13 (Timm13) from Mus musculus (Mouse).